A 444-amino-acid chain; its full sequence is uncharacterized protein (444 aa).

Residues 1–72 (MGFLTAAIRV…RPMWNVSFLR (72 aa)) constitute a chloroplast transit peptide. Residues 77 to 107 (HSTPARETGDDDISKSENSSSQDGDSCTKLK) form a disordered region. The span at 92–101 (SENSSSQDGD) shows a compositional bias: polar residues. Residues 175–272 (EILTPEEHFY…KNYVQPPTEI (98 aa)) enclose the CRM domain. A coiled-coil region spans residues 292 to 355 (DALRAVRKYI…CLEDEQEEDE (64 aa)). 2 disordered regions span residues 344 to 364 (EECL…ATDS) and 392 to 426 (KFPA…PNFD). Over residues 346–357 (CLEDEQEEDEAG) the composition is skewed to acidic residues. Residues 406–426 (DLGKAKSEGEENDDDKSPNFD) are compositionally biased toward basic and acidic residues.

Its subcellular location is the plastid. It is found in the chloroplast. This is an uncharacterized protein from Arabidopsis thaliana (Mouse-ear cress).